We begin with the raw amino-acid sequence, 253 residues long: Triosephosphate isomerase, cytosolic (253 aa).

N10 and K12 together coordinate substrate. H96 serves as the catalytic Electrophile. The active-site Proton acceptor is E166.

Belongs to the triosephosphate isomerase family. Homodimer.

It localises to the cytoplasm. The enzyme catalyses D-glyceraldehyde 3-phosphate = dihydroxyacetone phosphate. Its pathway is carbohydrate biosynthesis; gluconeogenesis. It functions in the pathway carbohydrate degradation; glycolysis; D-glyceraldehyde 3-phosphate from glycerone phosphate: step 1/1. In Secale cereale (Rye), this protein is Triosephosphate isomerase, cytosolic.